A 257-amino-acid chain; its full sequence is Protein TONNEAU 1b (257 aa).

A LisH domain is found at 73-105 (SGRLLSALICEYLDWAQLNHTLKVYQPECNSAK). 2 disordered regions span residues 148–216 (QVMG…EDMP) and 231–257 (LDRK…EGKD). Residues 187-199 (SVSASQASGAATS) show a composition bias toward low complexity. Basic and acidic residues-rich tracts occupy residues 201-212 (YRKDESNWRYDT) and 244-257 (NVKD…EGKD).

In terms of assembly, interacts with CEN1, LNG1/TRM2 and LNG2/TRM1 (via C-terminus).

Its subcellular location is the cytoplasm. The protein resides in the cytoskeleton. Involved in the control of the dynamic organization of the cortical cytoskeleton. May play a role in the organization of microtubule arrays at the centrosome through interaction with centrin 1 (CEN1). The sequence is that of Protein TONNEAU 1b (TON1B) from Arabidopsis thaliana (Mouse-ear cress).